A 310-amino-acid polypeptide reads, in one-letter code: GMP synthase [glutamine-hydrolyzing] subunit B (310 aa).

A GMPS ATP-PPase domain is found at Phe-2–Arg-185. Ser-29 to Ala-35 lines the ATP pocket.

Heterodimer composed of a glutamine amidotransferase subunit (A) and a GMP-binding subunit (B).

It catalyses the reaction XMP + L-glutamine + ATP + H2O = GMP + L-glutamate + AMP + diphosphate + 2 H(+). It participates in purine metabolism; GMP biosynthesis; GMP from XMP (L-Gln route): step 1/1. Catalyzes the synthesis of GMP from XMP. The sequence is that of GMP synthase [glutamine-hydrolyzing] subunit B from Methanococcus maripaludis (strain DSM 14266 / JCM 13030 / NBRC 101832 / S2 / LL).